Here is a 133-residue protein sequence, read N- to C-terminus: Small ribosomal subunit protein uS9 (133 aa).

The interval 97–133 is disordered; the sequence is MKQELKSQGFLTRDPRKKERKKYGRKKARKSFQFSKR. Over residues 114 to 133 the composition is skewed to basic residues; sequence KERKKYGRKKARKSFQFSKR.

The protein belongs to the universal ribosomal protein uS9 family.

This chain is Small ribosomal subunit protein uS9 (rpsI), found in Chlamydia muridarum (strain MoPn / Nigg).